We begin with the raw amino-acid sequence, 98 residues long: UPF0213 protein in ldhD 5'region (98 aa).

Residues 7 to 84 (NGFYFYVLWC…KKQSRKEKLK (78 aa)) form the GIY-YIG domain.

This sequence belongs to the UPF0213 family.

The sequence is that of UPF0213 protein in ldhD 5'region from Pediococcus acidilactici.